Here is a 246-residue protein sequence, read N- to C-terminus: Probable transcriptional regulatory protein YebC (246 aa).

Residues 1–20 (MAGHSKWANTRHRKAAQDAK) form a disordered region.

It belongs to the TACO1 family.

It localises to the cytoplasm. This chain is Probable transcriptional regulatory protein YebC, found in Salmonella typhimurium (strain LT2 / SGSC1412 / ATCC 700720).